A 322-amino-acid polypeptide reads, in one-letter code: Adenine deaminase (322 aa).

Positions 11, 13, and 189 each coordinate Zn(2+). The active-site Proton donor is glutamate 192. Aspartate 270 provides a ligand contact to Zn(2+). Aspartate 271 is a binding site for substrate.

This sequence belongs to the metallo-dependent hydrolases superfamily. Adenosine and AMP deaminases family. Adenine deaminase type 2 subfamily. Zn(2+) is required as a cofactor.

The enzyme catalyses adenine + H2O + H(+) = hypoxanthine + NH4(+). Its function is as follows. Catalyzes the hydrolytic deamination of adenine to hypoxanthine. Plays an important role in the purine salvage pathway and in nitrogen catabolism. The polypeptide is Adenine deaminase (Rhizobium etli (strain ATCC 51251 / DSM 11541 / JCM 21823 / NBRC 15573 / CFN 42)).